Reading from the N-terminus, the 261-residue chain is Ribosomal RNA small subunit methyltransferase J (261 aa).

S-adenosyl-L-methionine contacts are provided by residues 109-110 (RD), 125-126 (ER), and Asp179.

This sequence belongs to the methyltransferase superfamily. RsmJ family.

Its subcellular location is the cytoplasm. It carries out the reaction guanosine(1516) in 16S rRNA + S-adenosyl-L-methionine = N(2)-methylguanosine(1516) in 16S rRNA + S-adenosyl-L-homocysteine + H(+). Functionally, specifically methylates the guanosine in position 1516 of 16S rRNA. The polypeptide is Ribosomal RNA small subunit methyltransferase J (Pseudomonas paraeruginosa (strain DSM 24068 / PA7) (Pseudomonas aeruginosa (strain PA7))).